A 187-amino-acid polypeptide reads, in one-letter code: Inner membrane-spanning protein YciB (187 aa).

A run of 5 helical transmembrane segments spans residues 25 to 45 (ATGALIAATAIQIVVTYALYK), 50 to 70 (MQLITFLMVAIFGGMTIFLHD), 76 to 96 (WKVTIVYAVFAIGLTVSHVMG), 118 to 138 (INWAWVGFFTFCAGLNIYVAY), and 148 to 168 (FKVFGLLAATLVFTVLTGGYI).

This sequence belongs to the YciB family.

It is found in the cell inner membrane. Functionally, plays a role in cell envelope biogenesis, maintenance of cell envelope integrity and membrane homeostasis. This chain is Inner membrane-spanning protein YciB, found in Vibrio vulnificus (strain CMCP6).